The following is a 357-amino-acid chain: Mannonate dehydratase (357 aa).

This sequence belongs to the mannonate dehydratase family. The cofactor is Fe(2+). Requires Mn(2+) as cofactor.

The enzyme catalyses D-mannonate = 2-dehydro-3-deoxy-D-gluconate + H2O. The protein operates within carbohydrate metabolism; pentose and glucuronate interconversion. Functionally, catalyzes the dehydration of D-mannonate. The protein is Mannonate dehydratase of Sorangium cellulosum (strain So ce56) (Polyangium cellulosum (strain So ce56)).